The following is a 259-amino-acid chain: Ribosomal RNA small subunit methyltransferase A (259 aa).

S-adenosyl-L-methionine-binding residues include Asn-12, Leu-14, Gly-39, Glu-60, Asp-84, and Asn-102.

This sequence belongs to the class I-like SAM-binding methyltransferase superfamily. rRNA adenine N(6)-methyltransferase family. RsmA subfamily.

The protein resides in the cytoplasm. It carries out the reaction adenosine(1518)/adenosine(1519) in 16S rRNA + 4 S-adenosyl-L-methionine = N(6)-dimethyladenosine(1518)/N(6)-dimethyladenosine(1519) in 16S rRNA + 4 S-adenosyl-L-homocysteine + 4 H(+). Specifically dimethylates two adjacent adenosines (A1518 and A1519) in the loop of a conserved hairpin near the 3'-end of 16S rRNA in the 30S particle. May play a critical role in biogenesis of 30S subunits. The chain is Ribosomal RNA small subunit methyltransferase A from Nitrosospira multiformis (strain ATCC 25196 / NCIMB 11849 / C 71).